Here is an 87-residue protein sequence, read N- to C-terminus: Small ribosomal subunit protein bS20 (87 aa).

The tract at residues 1 to 27 (MANIKSAKKRAVQSEKRRKHNASRRSM) is disordered.

It belongs to the bacterial ribosomal protein bS20 family.

Its function is as follows. Binds directly to 16S ribosomal RNA. This chain is Small ribosomal subunit protein bS20, found in Pectobacterium carotovorum subsp. carotovorum (strain PC1).